A 223-amino-acid polypeptide reads, in one-letter code: Ribose-5-phosphate isomerase A (223 aa).

Residues 32–35 (TGST), 85–88 (DGAD), and 98–101 (KGGG) each bind substrate. Glu-107 (proton acceptor) is an active-site residue. Position 125 (Lys-125) interacts with substrate.

It belongs to the ribose 5-phosphate isomerase family. As to quaternary structure, homodimer.

The catalysed reaction is aldehydo-D-ribose 5-phosphate = D-ribulose 5-phosphate. It participates in carbohydrate degradation; pentose phosphate pathway; D-ribose 5-phosphate from D-ribulose 5-phosphate (non-oxidative stage): step 1/1. Functionally, catalyzes the reversible conversion of ribose-5-phosphate to ribulose 5-phosphate. The chain is Ribose-5-phosphate isomerase A from Pseudomonas fluorescens (strain ATCC BAA-477 / NRRL B-23932 / Pf-5).